The chain runs to 768 residues: Vacuolar basic amino acid transporter 4 (768 aa).

Residues 1–252 (MGKKDRQRKK…HDLTRRRIFS (252 aa)) are Cytoplasmic-facing. The stretch at 9 to 40 (KKLREFAKLKNRQRNLRKSVQTLKNEVQREAK) forms a coiled coil. The interval 34-172 (EVQREAKVPR…ELPVSSSNSF (139 aa)) is disordered. A phosphoserine mark is found at serine 62, serine 99, and serine 106. The span at 110-121 (KPADKANEDDLK) shows a compositional bias: basic and acidic residues. The segment covering 132–159 (SALQSSITDFSDRSVSPLQSITSCNTPM) has biased composition (polar residues). A phosphoserine mark is found at serine 160 and serine 192. A helical transmembrane segment spans residues 253-273 (SCMCTYLFFIAMDSSIILVIA). Over 274 to 282 (SKIASEFHE) the chain is Vacuolar. A helical transmembrane segment spans residues 283–305 (LWRLSLVISAYLLSNAIGQLVFL). Residues 306–311 (KLSLIS) lie on the Cytoplasmic side of the membrane. Residues 312–331 (SVKLLLCIAQFSFILGGYLS) form a helical membrane-spanning segment. The Vacuolar portion of the chain corresponds to 332–334 (WSS). The helical transmembrane segment at 335-357 (AHFWTFIFARCVTGFGGGSLIAL) threads the bilayer. Topologically, residues 358-375 (KSTIMNRFSQKNDSRYSL) are cytoplasmic. Residues 376-396 (SASMITFAMGVVIGPFMMNLF) traverse the membrane as a helical segment. The Vacuolar segment spans residues 397-406 (DSSHGSGWRN). A helical transmembrane segment spans residues 407–427 (AFLIPVPFCLVNASIMLADMY). Over 428-447 (SVKSTLYGRPTPTLWKRFKN) the chain is Cytoplasmic. A helical membrane pass occupies residues 448–468 (TLLSPDLYEILTLTLFLLCFV). At 469 to 481 (QVTSLDLTGLKNN) the chain is on the vacuolar side. Asparagine 480 carries an N-linked (GlcNAc...) asparagine glycan. The helical transmembrane segment at 482 to 502 (TMIQALLFSVIIVCGILFFLI) threads the bilayer. The Cytoplasmic portion of the chain corresponds to 503–522 (ETSDTYMNSVISMSLQGDKR). A helical membrane pass occupies residues 523–543 (LIWTMIGISFCFAALMCIIPF). At 544–562 (GTTYFIIVLNLSTLQLAER) the chain is on the vacuolar side. N-linked (GlcNAc...) asparagine glycosylation occurs at asparagine 553. The chain crosses the membrane as a helical span at residues 563–583 (LSPFFFSIVLGYFSVSYFWKS). Residues 584-587 (KGQN) are Cytoplasmic-facing. A helical membrane pass occupies residues 588 to 608 (FLLKFVLSGATLLLYVALMGV). Residues 609–617 (SLNLPVWKQ) lie on the Vacuolar side of the membrane. The chain crosses the membrane as a helical span at residues 618–638 (YICLSLPFLGSSMILTLLSNL). Residues 639–653 (YHEYHEQRKSPISGS) are Cytoplasmic-facing. A helical membrane pass occupies residues 654–674 (IVYCFGAVGGTVGISLGGYVF). Topologically, residues 675 to 734 (HKTLIKLMHEKVMPFSKQGYLKKDLLKIIKHATESSDWVHESAPKFVFQTLIECYLQACR) are vacuolar. The chain crosses the membrane as a helical span at residues 735-755 (NVFKLSTLFFTITVVAIFIFN). The Cytoplasmic portion of the chain corresponds to 756 to 768 (RIHCRSQNCLSLS).

Belongs to the major facilitator superfamily.

The protein localises to the vacuole membrane. Transporter required for vacuolar uptake of basic amino acids. This chain is Vacuolar basic amino acid transporter 4 (VBA4), found in Saccharomyces cerevisiae (strain ATCC 204508 / S288c) (Baker's yeast).